The chain runs to 382 residues: MSNRHLPIGTRDEFGPRAIRKENLIQTISQQFIQAGFERVKTPLLEYRDVFKPLAVSGEQPYQMLDDAGESVVMRPDLTLPLARLLSTTSIVPPVQWWYVGDIFRVKKSLSGTYNQITQAGIELIGYRSLKAEWACLSEAGKICRTLGLTHLTLELSDAQFVPQILRTLQLNDAAADAFQTAFFAKELSTYQNLIAPLATNPLYPFLQQWPWLFGDSETIFAELKRLLPSNVITDRLAPLQQTVAFLKDQFPELRVTIDLTSRPPQSYYTGIFFHAYVDGGHQYLFSGGRYDKLLASFQQELLPAVGLAFDIDAVTDQLPNAPDQPLTFVYGLPSQWQAAAAMVATTPNARLCLVDTLAEAQAAATKQHANLIDLSPKEAIL.

The protein belongs to the class-II aminoacyl-tRNA synthetase family. HisZ subfamily. Heteromultimer composed of HisG and HisZ subunits.

It localises to the cytoplasm. It functions in the pathway amino-acid biosynthesis; L-histidine biosynthesis; L-histidine from 5-phospho-alpha-D-ribose 1-diphosphate: step 1/9. Functionally, required for the first step of histidine biosynthesis. May allow the feedback regulation of ATP phosphoribosyltransferase activity by histidine. The sequence is that of ATP phosphoribosyltransferase regulatory subunit from Lacticaseibacillus casei (strain BL23) (Lactobacillus casei).